The chain runs to 984 residues: Putative formate dehydrogenase SH0748 (984 aa).

One can recognise a 2Fe-2S ferredoxin-type domain in the interval 3 to 79 (EHLIVTLDGT…PMTVNTQNND (77 aa)). Positions 37, 48, 51, and 63 each coordinate [2Fe-2S] cluster. A 4Fe-4S His(Cys)3-ligated-type domain is found at 79–119 (DVKASQKEALDRILEKHMLYCTVCDYNNGDCEIHNAMDAWG). [4Fe-4S] cluster-binding residues include histidine 95, cysteine 99, cysteine 102, cysteine 109, cysteine 147, cysteine 150, cysteine 153, cysteine 157, cysteine 190, cysteine 193, cysteine 196, cysteine 200, cysteine 264, cysteine 267, cysteine 271, and cysteine 299. 2 4Fe-4S ferredoxin-type domains span residues 138–165 (PFYR…VNET) and 181–211 (NDVP…VNME). A formate dehydrogenase region spans residues 252–984 (MRKERIKKTK…YVFPGNVVDK (733 aa)). Residues 257–313 (IKKTKTVCTYCGVGCSFDVWTKDREVLKVQPSHDSPANKIATCVKGKFSWGHINSDQ) enclose the 4Fe-4S Mo/W bis-MGD-type domain.

It in the C-terminal section; belongs to the prokaryotic molybdopterin-containing oxidoreductase family. [2Fe-2S] cluster serves as cofactor. The cofactor is [4Fe-4S] cluster. Mo-bis(molybdopterin guanine dinucleotide) is required as a cofactor.

The catalysed reaction is formate + NAD(+) = CO2 + NADH. The sequence is that of Putative formate dehydrogenase SH0748 from Staphylococcus haemolyticus (strain JCSC1435).